The following is a 403-amino-acid chain: Protein-export membrane protein SecD (403 aa).

6 helical membrane passes run 14–34, 238–258, 265–285, 294–314, 336–356, and 365–385; these read VILL…MGIQ, FAEG…VILI, ILVL…LGAA, LAAI…QIII, FFII…LAYI, and IGLL…GVFI.

The protein belongs to the SecD/SecF family. SecD subfamily. In terms of assembly, part of the protein translocation apparatus. Forms a complex with SecF.

It is found in the cell membrane. Its function is as follows. Involved in protein export. The chain is Protein-export membrane protein SecD from Methanothermobacter thermautotrophicus (strain ATCC 29096 / DSM 1053 / JCM 10044 / NBRC 100330 / Delta H) (Methanobacterium thermoautotrophicum).